The primary structure comprises 314 residues: Dihydropteroate synthase (314 aa).

Residues 10–294 (TVICGIINVT…DVASHRMAVE (285 aa)) enclose the Pterin-binding domain. Residue Asn-17 participates in Mg(2+) binding. (7,8-dihydropterin-6-yl)methyl diphosphate contacts are provided by residues Asp-91, Asn-110, Asp-201, Lys-237, and 282–284 (RVH).

Belongs to the DHPS family. In terms of assembly, homodimer. Requires Mg(2+) as cofactor.

It carries out the reaction (7,8-dihydropterin-6-yl)methyl diphosphate + 4-aminobenzoate = 7,8-dihydropteroate + diphosphate. Its pathway is cofactor biosynthesis; tetrahydrofolate biosynthesis; 7,8-dihydrofolate from 2-amino-4-hydroxy-6-hydroxymethyl-7,8-dihydropteridine diphosphate and 4-aminobenzoate: step 1/2. With respect to regulation, is potently inhibited by sulfonamides, with Ki values between 25 nM and 850 nM. Catalyzes the condensation of para-aminobenzoate (pABA) with 6-hydroxymethyl-7,8-dihydropterin diphosphate (DHPt-PP) to form 7,8-dihydropteroate, the immediate precursor of folate derivatives. In terms of biological role, is the target for the sulfonamide group of antimicrobial drugs. Sulfonamide drugs act as pABA analogs, they inhibit the reaction by acting as alternative substrates, leading to a 'dead end' sulfa-pterin product. This Streptococcus pneumoniae (strain ATCC BAA-255 / R6) protein is Dihydropteroate synthase (sulA).